A 721-amino-acid polypeptide reads, in one-letter code: Catalase-peroxidase 1 (721 aa).

A cross-link (tryptophyl-tyrosyl-methioninium (Trp-Tyr) (with M-249)) is located at residues 98 to 223; it reads WHAAGSYRVA…LAAVQMGLIY (126 aa). Catalysis depends on His99, which acts as the Proton acceptor. Positions 223–249 form a cross-link, tryptophyl-tyrosyl-methioninium (Tyr-Met) (with W-98); that stretch reads YVNPEGVNGQPDPLRTAQDVRVTFGRM. A heme b-binding site is contributed by His264.

This sequence belongs to the peroxidase family. Peroxidase/catalase subfamily. As to quaternary structure, homodimer or homotetramer. Heme b serves as cofactor. Post-translationally, formation of the three residue Trp-Tyr-Met cross-link is important for the catalase, but not the peroxidase activity of the enzyme.

The enzyme catalyses H2O2 + AH2 = A + 2 H2O. It catalyses the reaction 2 H2O2 = O2 + 2 H2O. In terms of biological role, bifunctional enzyme with both catalase and broad-spectrum peroxidase activity. This chain is Catalase-peroxidase 1, found in Legionella pneumophila (strain Corby).